Consider the following 355-residue polypeptide: NADH dehydrogenase [ubiquinone] 1 alpha subcomplex subunit 10, mitochondrial (355 aa).

A mitochondrion-targeting transit peptide spans 1–35 (MALRLLRLVPASAPARGLAAGAQRVGRIHTSVHCK). Residue K122 is modified to N6-acetyllysine; alternate. K122 is subject to N6-succinyllysine; alternate. Residue S250 is modified to Phosphoserine; by PINK1. K285 is subject to N6-succinyllysine.

This sequence belongs to the complex I NDUFA10 subunit family. As to quaternary structure, complex I is composed of 45 different subunits. This a component of the hydrophobic protein fraction. Requires FAD as cofactor. In terms of processing, phosphorylation at Ser-250 by PINK1 is required for the binding and/or reduction of the complex I substrate ubiquinone. Acetylation of Lys-242 is observed in liver mitochondria from fasted mice but not from fed mice.

The protein resides in the mitochondrion matrix. In terms of biological role, accessory subunit of the mitochondrial membrane respiratory chain NADH dehydrogenase (Complex I), that is believed not to be involved in catalysis. Complex I functions in the transfer of electrons from NADH to the respiratory chain. The immediate electron acceptor for the enzyme is believed to be ubiquinone. This chain is NADH dehydrogenase [ubiquinone] 1 alpha subcomplex subunit 10, mitochondrial (Ndufa10), found in Mus musculus (Mouse).